Reading from the N-terminus, the 282-residue chain is Light-independent protochlorophyllide reductase iron-sulfur ATP-binding protein (282 aa).

Residues glycine 10–threonine 15 and lysine 39 contribute to the ATP site. A Mg(2+)-binding site is contributed by serine 14. The [4Fe-4S] cluster site is built by cysteine 95 and cysteine 129. Asparagine 180–arginine 181 contacts ATP.

Belongs to the NifH/BchL/ChlL family. Homodimer. Protochlorophyllide reductase is composed of three subunits; ChlL, ChlN and ChlB. Requires [4Fe-4S] cluster as cofactor.

It localises to the plastid. It is found in the cyanelle. The enzyme catalyses chlorophyllide a + oxidized 2[4Fe-4S]-[ferredoxin] + 2 ADP + 2 phosphate = protochlorophyllide a + reduced 2[4Fe-4S]-[ferredoxin] + 2 ATP + 2 H2O. It functions in the pathway porphyrin-containing compound metabolism; chlorophyll biosynthesis (light-independent). Component of the dark-operative protochlorophyllide reductase (DPOR) that uses Mg-ATP and reduced ferredoxin to reduce ring D of protochlorophyllide (Pchlide) to form chlorophyllide a (Chlide). This reaction is light-independent. The L component serves as a unique electron donor to the NB-component of the complex, and binds Mg-ATP. This chain is Light-independent protochlorophyllide reductase iron-sulfur ATP-binding protein, found in Cyanophora paradoxa.